The following is a 404-amino-acid chain: Keratin, type I microfibrillar, 47.6 kDa (404 aa).

The tract at residues 1–56 (MSFNFCLPNLSFRSSCSSRPCVPSSCCGTTLPGACNIPASVGSCNWFCEGSFNGNE) is head. The IF rod domain maps to 56–367 (EKETMQFLND…GLLDSEDCKL (312 aa)). The segment at 57–91 (KETMQFLNDRLASYLEKVRQLERENAELERRILER) is coil 1A. The linker 1 stretch occupies residues 92 to 102 (SQQQEPLVCPN). The segment at 103–203 (YQSYFRTIEE…HEQEVNTLRS (101 aa)) is coil 1B. The segment at 204–219 (QLGDRLNVEVDAAPTV) is linker 12. The interval 220-363 (DLNHVLNETR…NTYRGLLDSE (144 aa)) is coil 2. The tail stretch occupies residues 364 to 404 (DCKLPCNPCATTNTCGKPIGPCISNPCVSRTRCGPCNTFVH).

This sequence belongs to the intermediate filament family.

In terms of biological role, wool microfibrillar keratin. The sequence is that of Keratin, type I microfibrillar, 47.6 kDa from Ovis aries (Sheep).